Here is an 840-residue protein sequence, read N- to C-terminus: Axin-2 (840 aa).

Residues 1-75 are disordered; it reads MSSAVLVTLL…EGRASPDSPL (75 aa). The short motif at 21-30 is the Tankyrase-binding motif element; sequence APRPPVPGEE. The segment covering 42 to 55 has biased composition (polar residues); sequence KVQSTKPMPVSSNA. The segment covering 56–69 has biased composition (basic and acidic residues); that stretch reads RRNEDGLGEPEGRA. Positions 81–200 constitute an RGS domain; it reads SLHSLLGDQD…LTSDIYLEYV (120 aa). 5 disordered regions span residues 300 to 363, 398 to 435, 447 to 485, 572 to 614, and 715 to 745; these read SELS…KEMT, IRED…EEDP, LKTP…LLPT, RGGT…GDRS, and ASQQ…EDHK. A compositionally biased stretch (low complexity) spans 303–318; the sequence is SSDALTDDSMSMTDSS. An interaction with GSK3B region spans residues 327–413; it reads MGSKKQLQRE…KEGSEQALSS (87 aa). An interaction with beta-catenin region spans residues 413 to 478; the sequence is SRDGAPVQHP…HHHQHHHHQQ (66 aa). The segment covering 468–478 has biased composition (basic residues); the sequence is DHHHQHHHHQQ. Positions 758–840 constitute a DIX domain; sequence ASELVVTYFF…RILGKVERID (83 aa).

Interacts with glycogen synthase kinase-3 beta (GSK3B) and beta-catenin. The interaction between axin and beta-catenin occurs via the armadillo repeats contained in beta-catenin. Interacts with SMAD7 and RNF111. Interacts with ANKRD6. Interacts with SIAH1. Interacts with SIAH2. Post-translationally, ADP-ribosylated by tankyrase TNKS and TNKS2. Poly-ADP-ribosylated protein is recognized by RNF146, followed by ubiquitination and subsequent activation of the Wnt signaling pathway. In terms of processing, ubiquitinated by RNF146 when poly-ADP-ribosylated, leading to its degradation and subsequent activation of the Wnt signaling pathway. Deubiquitinated by USP34, deubiquitinated downstream of beta-catenin stabilization step: deubiquitination is important Wnt signaling to positively regulate beta-catenin (CTNBB1)-mediated transcription. Probably phosphorylated by GSK3B and dephosphorylated by PP2A. Expressed in Tcf7-positive innate-like T-cells (at protein level).

The protein resides in the cytoplasm. Functionally, inhibitor of the Wnt signaling pathway. Down-regulates beta-catenin. Probably facilitate the phosphorylation of beta-catenin and APC by GSK3B. This is Axin-2 from Mus musculus (Mouse).